The primary structure comprises 327 residues: 2-keto-3-deoxygluconate permease (327 aa).

10 consecutive transmembrane segments (helical) span residues 10–30 (IPGGMMLVPLFLGALCHTFSP), 42–62 (GMITGTVPILAVWFFCMGASI), 73–93 (KSGTLVVTKIAVAWVVAAIAS), 95–115 (IIPEHGVEVGFFAGLSTLALV), 139–159 (AGAFVLMSLESGPLMTMIILG), 163–183 (IASFEPHVFVGAVLPFLVGFA), 199–219 (VQTLIPFFAFALGNTIDLTVI), 224–244 (LLGILLGVAVIIVTGIPLIIA), 254–274 (TAGIAASSSAGAAVATPVLIA), and 289–309 (SLVATAVIVTSILVPILTSIW).

It belongs to the KdgT transporter family.

The protein resides in the cell inner membrane. The catalysed reaction is 2-dehydro-3-deoxy-D-gluconate(in) + H(+)(in) = 2-dehydro-3-deoxy-D-gluconate(out) + H(+)(out). In terms of biological role, catalyzes the proton-dependent uptake of 2-keto-3-deoxygluconate (KDG) into the cell. The polypeptide is 2-keto-3-deoxygluconate permease (Escherichia coli O127:H6 (strain E2348/69 / EPEC)).